Consider the following 1386-residue polypeptide: DNA-directed RNA polymerase subunit beta'' (1386 aa).

Cys224, Cys294, Cys301, and Cys304 together coordinate Zn(2+).

This sequence belongs to the RNA polymerase beta' chain family. RpoC2 subfamily. In terms of assembly, in plastids the minimal PEP RNA polymerase catalytic core is composed of four subunits: alpha, beta, beta', and beta''. When a (nuclear-encoded) sigma factor is associated with the core the holoenzyme is formed, which can initiate transcription. Requires Zn(2+) as cofactor.

It is found in the plastid. The protein localises to the chloroplast. It catalyses the reaction RNA(n) + a ribonucleoside 5'-triphosphate = RNA(n+1) + diphosphate. DNA-dependent RNA polymerase catalyzes the transcription of DNA into RNA using the four ribonucleoside triphosphates as substrates. The polypeptide is DNA-directed RNA polymerase subunit beta'' (Acorus calamus (Sweet flag)).